A 573-amino-acid chain; its full sequence is Urease subunit alpha 1 (573 aa).

Residues 136-573 (GGIDTHVHFI…LPLAQRYFLF (438 aa)) form the Urease domain. Positions 141, 143, and 224 each coordinate Ni(2+). Position 224 is an N6-carboxylysine (Lys-224). His-226 is a substrate binding site. Ni(2+) is bound by residues His-253 and His-279. The active-site Proton donor is His-327. A Ni(2+)-binding site is contributed by Asp-367.

The protein belongs to the metallo-dependent hydrolases superfamily. Urease alpha subunit family. In terms of assembly, may form a heterohexamer of 3 UreC (alpha) and 3 UreAB (gamma/beta) subunits. May also form a heterotrimer of UreA (gamma), UreB (beta) and UreC (alpha) subunits. Three heterotrimers associate to form the active enzyme. Ni cation is required as a cofactor. Carboxylation allows a single lysine to coordinate two nickel ions.

The protein resides in the cytoplasm. It catalyses the reaction urea + 2 H2O + H(+) = hydrogencarbonate + 2 NH4(+). It participates in nitrogen metabolism; urea degradation; CO(2) and NH(3) from urea (urease route): step 1/1. The polypeptide is Urease subunit alpha 1 (Streptomyces coelicolor (strain ATCC BAA-471 / A3(2) / M145)).